We begin with the raw amino-acid sequence, 258 residues long: Imidazole glycerol phosphate synthase subunit HisF (258 aa).

Active-site residues include aspartate 11 and aspartate 130.

Belongs to the HisA/HisF family. In terms of assembly, heterodimer of HisH and HisF.

Its subcellular location is the cytoplasm. The catalysed reaction is 5-[(5-phospho-1-deoxy-D-ribulos-1-ylimino)methylamino]-1-(5-phospho-beta-D-ribosyl)imidazole-4-carboxamide + L-glutamine = D-erythro-1-(imidazol-4-yl)glycerol 3-phosphate + 5-amino-1-(5-phospho-beta-D-ribosyl)imidazole-4-carboxamide + L-glutamate + H(+). The protein operates within amino-acid biosynthesis; L-histidine biosynthesis; L-histidine from 5-phospho-alpha-D-ribose 1-diphosphate: step 5/9. In terms of biological role, IGPS catalyzes the conversion of PRFAR and glutamine to IGP, AICAR and glutamate. The HisF subunit catalyzes the cyclization activity that produces IGP and AICAR from PRFAR using the ammonia provided by the HisH subunit. In Shigella boydii serotype 18 (strain CDC 3083-94 / BS512), this protein is Imidazole glycerol phosphate synthase subunit HisF.